A 430-amino-acid polypeptide reads, in one-letter code: Corticosteroid-binding globulin (430 aa).

The signal sequence occupies residues 1–22 (MLLTLYTCLLWLSTSGLWTIQA). N-linked (GlcNAc...) asparagine glycans are attached at residues Asn119, Asn175, and Asn243. Gln253 provides a ligand contact to cortisol. Residue Asn259 is glycosylated (N-linked (GlcNAc...) asparagine). Residue Gln285 coordinates cortisol. Asn326 carries an N-linked (GlcNAc...) asparagine glycan. Trp392 lines the cortisol pocket.

This sequence belongs to the serpin family. As to expression, expressed by the liver; secreted in plasma.

It localises to the secreted. Major transport protein for glucocorticoids and progestins in the blood of almost all vertebrate species. This is Corticosteroid-binding globulin (SERPINA6) from Ovis aries (Sheep).